Here is a 215-residue protein sequence, read N- to C-terminus: MGQKVNPILFRLPVNRQWRSIWYADKKTFPRFIWEDYQIRKFIKKRLESAAVAKIVIERAGNRVRINIHTARPGLVIGRRAAELDKIKEEIMEIVEKGREVLVDVKEVKHPELEAQLVAENIALQIERRVAYRRAIKRAMQLTMDAGAVGIKVRCAGRLGGAEIARAERYHEGKVPLHSLRADVDYGFAEAKTVAGKIGVKVWICRKEDIATVVG.

In terms of domain architecture, KH type-2 spans 39-109 (IRKFIKKRLE…EVLVDVKEVK (71 aa)).

The protein belongs to the universal ribosomal protein uS3 family. Part of the 30S ribosomal subunit. Forms a tight complex with proteins S10 and S14.

Functionally, binds the lower part of the 30S subunit head. Binds mRNA in the 70S ribosome, positioning it for translation. This Methylacidiphilum infernorum (isolate V4) (Methylokorus infernorum (strain V4)) protein is Small ribosomal subunit protein uS3.